The sequence spans 435 residues: MPLFLLSLPTPPSASGHERRQRPEAKTSGSEKKYLRAMQANRSQLHSPPGTGSSEDASTPQCVHTRLTGEGSCPHSGDVHIQINSIPKECAENASSRNIRSGVHSCAHGCVHSRLRGHSHSEARLTDDTAAESGDHGSSSFSEFRYLFKWLQKSLPYILILSVKLVMQHITGISLGIGLLTTFMYANKSIVNQVFLRERSSKIQCAWLLVFLAGSSVLLYYTFHSQSLYYSLIFLNPTLDHLSFWEVFWIVGITDFILKFFFMGLKCLILLVPSFIMPFKSKGYWYMLLEELCQYYRTFVPIPVWFRYLISYGEFGNVTRWSLGILLALLYLILKLLEFFGHLRTFRQVLRIFFTQPSYGVAASKRQCSDVDDICSICQAEFQKPILLICQHIFCEECMTLWFNREKTCPLCRTVISDHINKWKDGATSSHLQIY.

The interval Met-1 to Cys-62 is disordered. Residues Gly-16–Tyr-34 show a composition bias toward basic and acidic residues. Over residues Ala-40–Cys-62 the composition is skewed to polar residues. 6 helical membrane-spanning segments follow: residues Ile-158–Gly-178, Ile-203–Phe-223, Ile-233–Ile-253, Phe-256–Ile-276, Thr-298–Val-318, and Leu-323–Leu-343. A required for ubiquitin ligase activity and for protection against ER stress-induced cell death region spans residues Cys-368–His-419. The RING-type zinc finger occupies Cys-375 to Arg-413.

Expressed at highest levels in testis, lower levels in heart, liver, lung, and kidney. Not detected in brain, ovary, and uterus. Down-regulated in testis from patients with maturation arrest (MA) or Sertoli cell-only syndrome (SCOS). Ubiquitously expressed with high expression in testis.

It localises to the endoplasmic reticulum membrane. The catalysed reaction is S-ubiquitinyl-[E2 ubiquitin-conjugating enzyme]-L-cysteine + [acceptor protein]-L-lysine = [E2 ubiquitin-conjugating enzyme]-L-cysteine + N(6)-ubiquitinyl-[acceptor protein]-L-lysine.. It participates in protein modification; protein ubiquitination. Functionally, E3 ubiquitin-protein ligase that acts in the endoplasmic reticulum (ER)-associated degradation (ERAD) pathway, which targets misfolded proteins that accumulate in the endoplasmic reticulum (ER) for ubiquitination and subsequent proteasome-mediated degradation. Protects cells from ER stress-induced apoptosis. This is E3 ubiquitin-protein ligase RNFT1 (RNFT1) from Homo sapiens (Human).